We begin with the raw amino-acid sequence, 560 residues long: Potassium-transporting ATPase potassium-binding subunit (560 aa).

The next 12 membrane-spanning stretches (helical) occupy residues 6–26 (FLLI…LGSL), 63–83 (LLAI…ILMC), 132–152 (GLAV…FALI), 175–195 (LWVL…QGAI), 250–270 (LTNV…CFAF), 282–302 (AILW…MWAE), 327–347 (FGIL…CGAV), 356–376 (ALGG…FGGV), 379–399 (GLYG…LMIG), 416–436 (MTAL…ALAM), 483–503 (LLLA…VMAI), and 524–544 (GALF…LTFI).

This sequence belongs to the KdpA family. In terms of assembly, the system is composed of three essential subunits: KdpA, KdpB and KdpC.

It is found in the cell inner membrane. In terms of biological role, part of the high-affinity ATP-driven potassium transport (or Kdp) system, which catalyzes the hydrolysis of ATP coupled with the electrogenic transport of potassium into the cytoplasm. This subunit binds the periplasmic potassium ions and delivers the ions to the membrane domain of KdpB through an intramembrane tunnel. This Cronobacter sakazakii (strain ATCC BAA-894) (Enterobacter sakazakii) protein is Potassium-transporting ATPase potassium-binding subunit.